The chain runs to 1623 residues: ABC transporter C family member 2 (1623 aa).

A run of 9 helical transmembrane segments spans residues 37 to 57 (FVLGISQLVLLVLCLYRIWLA), 76 to 96 (FLALLAAYATAEPLFRLIMGI), 109 to 129 (FEAFGLGVKAFAWGAVMVMIL), 145 to 165 (FAVIYALVGDMVLLNLVLSVK), 172 to 192 (VLYLYTSEVGAQVLFGILLFM), 336 to 356 (AWMGYIYAFSIFVGVVFGVLC), 440 to 460 (VASLIGALLLVLMFPLQTVII), 527 to 547 (FILNSIPVLVTIVSFGVFTLL), and 557 to 577 (FTSLSLFAVLRFPLFMLPNII). An ABC transmembrane type-1 1 domain is found at 302-582 (FWWGGFWKIG…LPNIITQVVN (281 aa)). An ABC transporter 1 domain is found at 614 to 838 (ISIRNGYFSW…GPLFQRLMEN (225 aa)). 649 to 656 (GSTGEGKT) lines the ATP pocket. The segment at 842–890 (VEEYSEENGEAEADQTAEQPVANGNTNGLQMDGSDDKKSKEGNKKGGKS) is disordered. Acidic residues predominate over residues 845–856 (YSEENGEAEADQ). Positions 857 to 870 (TAEQPVANGNTNGL) are enriched in polar residues. Residues 875–885 (SDDKKSKEGNK) are compositionally biased toward basic and acidic residues. The next 6 membrane-spanning stretches (helical) occupy residues 914–934 (ALGGAWVVMMLLLCYVLTEVF), 955–975 (GPLFYNLIYALLSFGQVLVTL), 1032–1054 (AVFVNMFMGQVSQLLSTVVLIGI), 1058–1077 (LSLWAIMPLLVLFYGAYLYY), 1143–1163 (LGIRLETLGGLMIWLTASFAV), and 1177–1197 (STMGLLLSYALNITSLLTGVL). In terms of domain architecture, ABC transmembrane type-1 2 spans 921–1205 (VMMLLLCYVL…VLRLASLAEN (285 aa)). An interaction with calmodulin and FKP42/TWD1 region spans residues 1236 to 1251 (WPSSGSIKFEDVVLRY). In terms of domain architecture, ABC transporter 2 spans 1242-1476 (IKFEDVVLRY…EGSSFSKMVQ (235 aa)). Position 1276-1283 (1276-1283 (GRTGAGKS)) interacts with ATP.

It belongs to the ABC transporter superfamily. ABCC family. Conjugate transporter (TC 3.A.1.208) subfamily. Interacts with FKBP42/TWD1 and probably with calmodulin (CaM). In terms of tissue distribution, ubiquitous, at low levels.

The protein localises to the vacuole membrane. It catalyses the reaction ATP + H2O + xenobioticSide 1 = ADP + phosphate + xenobioticSide 2.. Reciprocal promotion of DNP-GS and E(2)17betaG uptake. E(2)17betaG uptake is also stimulated by GSH and S-methyl-glutathione (S-methyl-GS), and, to a lower extent, by GSSG and C3G-GS. Metolachlor-GS and decyl-GS slightly inhibit E(2)17betaG uptake. Its function is as follows. Pump for glutathione S-conjugates. Mediates the transport of S-conjugates such as GSH, S-(2,4-dinitrophenyl)-glutathione (DNP-GS), GSSG, cyanidin 3-glucoside-GS (C3G-GS) and metolachlor-GS (MOC-GS), glucuronides such as 17-beta-estradiol 17-(beta-D-glucuronide) (E(2)17betaG), and of the chlorophyll catabolite such as B.napus nonfluorescent chlorophyll catabolite (Bn-NCC-1). This chain is ABC transporter C family member 2 (ABCC2), found in Arabidopsis thaliana (Mouse-ear cress).